Reading from the N-terminus, the 197-residue chain is Protein GrpE (197 aa).

A compositionally biased stretch (basic and acidic residues) spans 1–27; that stretch reads MSNKEQHIEKEEQLQEEKHEEQQKTEE. The tract at residues 1–34 is disordered; it reads MSNKEQHIEKEEQLQEEKHEEQQKTEETEVEAVN.

This sequence belongs to the GrpE family. As to quaternary structure, homodimer.

Its subcellular location is the cytoplasm. Participates actively in the response to hyperosmotic and heat shock by preventing the aggregation of stress-denatured proteins, in association with DnaK and GrpE. It is the nucleotide exchange factor for DnaK and may function as a thermosensor. Unfolded proteins bind initially to DnaJ; upon interaction with the DnaJ-bound protein, DnaK hydrolyzes its bound ATP, resulting in the formation of a stable complex. GrpE releases ADP from DnaK; ATP binding to DnaK triggers the release of the substrate protein, thus completing the reaction cycle. Several rounds of ATP-dependent interactions between DnaJ, DnaK and GrpE are required for fully efficient folding. This chain is Protein GrpE, found in Pasteurella multocida (strain Pm70).